The primary structure comprises 102 residues: Large ribosomal subunit protein bL21 (102 aa).

Belongs to the bacterial ribosomal protein bL21 family. In terms of assembly, part of the 50S ribosomal subunit. Contacts protein L20.

This protein binds to 23S rRNA in the presence of protein L20. This chain is Large ribosomal subunit protein bL21, found in Ehrlichia ruminantium (strain Gardel).